Consider the following 300-residue polypeptide: MDLENNNNTPLTGKQAEKCAKKRKCVITLDEKQVESKRLKKEESNVEATSRPPAQSPKKRLHLNGKPMQNKDLNFKYGNYKHYYGKRILNKDFHDIRLDVLGTQPDLFRNKQLLDIGCNSGHLSIQIARKFEVKSLVGLDIDRGLINDAQKTVSHLKRHATPGQGIPHIQFVHGNYVLEDDVLLEIERPQFDVILCLSVTKWIHLNFCDSGLKQAFRRMYLQLRPGGKLILEPQSFDGYKRRKKLSEQIRDNYNAIKFRPDHFTEYLLSPEVGFAEMKLMGIPEHCKVGFKRPIQIFTKS.

Polar residues predominate over residues 1-12; the sequence is MDLENNNNTPLT. Disordered regions lie at residues 1–21 and 34–68; these read MDLE…KCAK and VESK…GKPM. Positions 34-44 are enriched in basic and acidic residues; sequence VESKRLKKEES. In terms of domain architecture, Bin3-type SAM spans 95-300; that stretch reads DIRLDVLGTQ…KRPIQIFTKS (206 aa). 2 residues coordinate S-adenosyl-L-methionine: N119 and D140.

The protein belongs to the methyltransferase superfamily.

The protein localises to the nucleus. Functionally, probable S-adenosyl-L-methionine-dependent methyltransferase that binds and stabilizes U6 snRNA, probably by adding a methylphosphate cap at its 5'-end. Required for U6 stability, but not stability of 7SK snRNAs, other miRNAs or tRNAs. U6 stabilization is required for efficient pre-mRNA splicing. Essential for organismal and germline development. The sequence is that of U6 snRNA methylphosphate capping enzyme Amus from Drosophila melanogaster (Fruit fly).